The chain runs to 74 residues: Large ribosomal subunit protein eL38B (74 aa).

Belongs to the eukaryotic ribosomal protein eL38 family. As to quaternary structure, component of the large ribosomal subunit (LSU). Mature yeast ribosomes consist of a small (40S) and a large (60S) subunit. The 40S small subunit contains 1 molecule of ribosomal RNA (18S rRNA) and at least 33 different proteins. The large 60S subunit contains 3 rRNA molecules (25S, 5.8S and 5S rRNA) and at least 46 different proteins.

It is found in the cytoplasm. Functionally, component of the ribosome, a large ribonucleoprotein complex responsible for the synthesis of proteins in the cell. The small ribosomal subunit (SSU) binds messenger RNAs (mRNAs) and translates the encoded message by selecting cognate aminoacyl-transfer RNA (tRNA) molecules. The large subunit (LSU) contains the ribosomal catalytic site termed the peptidyl transferase center (PTC), which catalyzes the formation of peptide bonds, thereby polymerizing the amino acids delivered by tRNAs into a polypeptide chain. The nascent polypeptides leave the ribosome through a tunnel in the LSU and interact with protein factors that function in enzymatic processing, targeting, and the membrane insertion of nascent chains at the exit of the ribosomal tunnel. This Schizosaccharomyces pombe (strain 972 / ATCC 24843) (Fission yeast) protein is Large ribosomal subunit protein eL38B (rpl3802).